The sequence spans 1511 residues: DNA-directed RNA polymerase subunit beta' (1511 aa).

Positions 75, 77, 90, and 93 each coordinate Zn(2+). Residues aspartate 474, aspartate 476, and aspartate 478 each contribute to the Mg(2+) site. Residues cysteine 804, cysteine 878, cysteine 885, and cysteine 888 each contribute to the Zn(2+) site.

It belongs to the RNA polymerase beta' chain family. The RNAP catalytic core consists of 2 alpha, 1 beta, 1 beta' and 1 omega subunit. When a sigma factor is associated with the core the holoenzyme is formed, which can initiate transcription. Mg(2+) is required as a cofactor. The cofactor is Zn(2+).

The catalysed reaction is RNA(n) + a ribonucleoside 5'-triphosphate = RNA(n+1) + diphosphate. Functionally, DNA-dependent RNA polymerase catalyzes the transcription of DNA into RNA using the four ribonucleoside triphosphates as substrates. In Aliarcobacter butzleri (strain RM4018) (Arcobacter butzleri), this protein is DNA-directed RNA polymerase subunit beta'.